Here is a 426-residue protein sequence, read N- to C-terminus: 3-phosphoshikimate 1-carboxyvinyltransferase (426 aa).

Lys-21, Ser-22, and Arg-26 together coordinate 3-phosphoshikimate. Residue Lys-21 coordinates phosphoenolpyruvate. Residues Gly-93 and Arg-121 each contribute to the phosphoenolpyruvate site. Residues Ser-165, Gln-167, Asp-313, and Lys-340 each contribute to the 3-phosphoshikimate site. Gln-167 contributes to the phosphoenolpyruvate binding site. The active-site Proton acceptor is Asp-313. 2 residues coordinate phosphoenolpyruvate: Arg-344 and Arg-386.

This sequence belongs to the EPSP synthase family. As to quaternary structure, monomer.

It is found in the cytoplasm. The enzyme catalyses 3-phosphoshikimate + phosphoenolpyruvate = 5-O-(1-carboxyvinyl)-3-phosphoshikimate + phosphate. Its pathway is metabolic intermediate biosynthesis; chorismate biosynthesis; chorismate from D-erythrose 4-phosphate and phosphoenolpyruvate: step 6/7. In terms of biological role, catalyzes the transfer of the enolpyruvyl moiety of phosphoenolpyruvate (PEP) to the 5-hydroxyl of shikimate-3-phosphate (S3P) to produce enolpyruvyl shikimate-3-phosphate and inorganic phosphate. The sequence is that of 3-phosphoshikimate 1-carboxyvinyltransferase from Solibacter usitatus (strain Ellin6076).